The sequence spans 192 residues: MKKRLLGIALGSLLFTTGSAVAADYKIDKEGQHAFVNFRIQHLGYSWLYGTFKDFDGSFTFDEKNPAADKVNVTINTNSLDTNHAERDKHLRSAEFLNVAKFPQATFASTEVKKDGEDLDITGNLTLNGVTKPVTLEAKLIGQGDDPWGGKRAGFEASGKIRLKDFNITTDLGPASQEVDLIISVEGVQQKS.

Residues 1–22 (MKKRLLGIALGSLLFTTGSAVA) form the signal peptide.

The protein belongs to the UPF0312 family. Type 1 subfamily.

Its subcellular location is the periplasm. This is UPF0312 protein Ent638_1570 from Enterobacter sp. (strain 638).